The primary structure comprises 339 residues: Glycerol-3-phosphate dehydrogenase [NAD(P)+] (339 aa).

Residues S15, Y16, H36, and K110 each contribute to the NADPH site. Residues K110, G139, and T141 each coordinate sn-glycerol 3-phosphate. A143 lines the NADPH pocket. K195, D248, S258, R259, and N260 together coordinate sn-glycerol 3-phosphate. The active-site Proton acceptor is the K195. Position 259 (R259) interacts with NADPH. 2 residues coordinate NADPH: V283 and E285.

The protein belongs to the NAD-dependent glycerol-3-phosphate dehydrogenase family.

The protein resides in the cytoplasm. It carries out the reaction sn-glycerol 3-phosphate + NAD(+) = dihydroxyacetone phosphate + NADH + H(+). The catalysed reaction is sn-glycerol 3-phosphate + NADP(+) = dihydroxyacetone phosphate + NADPH + H(+). It participates in membrane lipid metabolism; glycerophospholipid metabolism. Its function is as follows. Catalyzes the reduction of the glycolytic intermediate dihydroxyacetone phosphate (DHAP) to sn-glycerol 3-phosphate (G3P), the key precursor for phospholipid synthesis. This is Glycerol-3-phosphate dehydrogenase [NAD(P)+] from Cronobacter sakazakii (strain ATCC BAA-894) (Enterobacter sakazakii).